The primary structure comprises 203 residues: Octanoyltransferase (203 aa).

In terms of domain architecture, BPL/LPL catalytic spans 32 to 203 (ISTPDEIWLV…LMHKIREIFS (172 aa)). Residues 71–78 (RGGKITYH), 138–140 (SLG), and 151–153 (GMA) each bind substrate. C169 serves as the catalytic Acyl-thioester intermediate.

The protein belongs to the LipB family.

It localises to the cytoplasm. The enzyme catalyses octanoyl-[ACP] + L-lysyl-[protein] = N(6)-octanoyl-L-lysyl-[protein] + holo-[ACP] + H(+). It functions in the pathway protein modification; protein lipoylation via endogenous pathway; protein N(6)-(lipoyl)lysine from octanoyl-[acyl-carrier-protein]: step 1/2. In terms of biological role, catalyzes the transfer of endogenously produced octanoic acid from octanoyl-acyl-carrier-protein onto the lipoyl domains of lipoate-dependent enzymes. Lipoyl-ACP can also act as a substrate although octanoyl-ACP is likely to be the physiological substrate. The polypeptide is Octanoyltransferase (Buchnera aphidicola subsp. Baizongia pistaciae (strain Bp)).